The primary structure comprises 898 residues: DNA mismatch repair protein MutS (898 aa).

Residue Gly-646–Ser-653 participates in ATP binding.

It belongs to the DNA mismatch repair MutS family.

Its function is as follows. This protein is involved in the repair of mismatches in DNA. It is possible that it carries out the mismatch recognition step. This protein has a weak ATPase activity. This chain is DNA mismatch repair protein MutS, found in Brucella ovis (strain ATCC 25840 / 63/290 / NCTC 10512).